The chain runs to 129 residues: Sigma factor-binding protein Crl (129 aa).

Positions Thr99–Val119 are essential for activity.

It belongs to the Crl family.

Its subcellular location is the cytoplasm. In terms of biological role, binds to the sigma-S subunit of RNA polymerase, activating expression of sigma-S-regulated genes. Stimulates RNA polymerase holoenzyme formation and may bind to several other sigma factors, such as sigma-70 and sigma-32. The polypeptide is Sigma factor-binding protein Crl (Vibrio vulnificus (strain CMCP6)).